Consider the following 215-residue polypeptide: Octanoyltransferase (215 aa).

The BPL/LPL catalytic domain maps to 31–206; it reads TSAEDEIWLV…QLVKHLDYAE (176 aa). Residues 70 to 77, 137 to 139, and 150 to 152 contribute to the substrate site; these read RGGQVTYH, SLG, and GLA. The active-site Acyl-thioester intermediate is the Cys168.

This sequence belongs to the LipB family.

The protein resides in the cytoplasm. The catalysed reaction is octanoyl-[ACP] + L-lysyl-[protein] = N(6)-octanoyl-L-lysyl-[protein] + holo-[ACP] + H(+). Its pathway is protein modification; protein lipoylation via endogenous pathway; protein N(6)-(lipoyl)lysine from octanoyl-[acyl-carrier-protein]: step 1/2. Catalyzes the transfer of endogenously produced octanoic acid from octanoyl-acyl-carrier-protein onto the lipoyl domains of lipoate-dependent enzymes. Lipoyl-ACP can also act as a substrate although octanoyl-ACP is likely to be the physiological substrate. The sequence is that of Octanoyltransferase from Pseudomonas fluorescens (strain SBW25).